Here is a 112-residue protein sequence, read N- to C-terminus: Secretoglobin family 2B member 24 (112 aa).

The N-terminal stretch at 1 to 23 (MKGTLLLLALLMIGELGFHTTEA) is a signal peptide.

The protein belongs to the secretoglobin family. In terms of tissue distribution, expressed in lacrimal gland, at higher level in males than females.

It is found in the secreted. This is Secretoglobin family 2B member 24 (Scgb2b24) from Mus musculus (Mouse).